A 159-amino-acid chain; its full sequence is Transcription elongation factor GreA (159 aa).

Residues 14–76 adopt a coiled-coil conformation; the sequence is IKKLENELEY…QLENMLKNAS (63 aa).

This sequence belongs to the GreA/GreB family.

Its function is as follows. Necessary for efficient RNA polymerase transcription elongation past template-encoded arresting sites. The arresting sites in DNA have the property of trapping a certain fraction of elongating RNA polymerases that pass through, resulting in locked ternary complexes. Cleavage of the nascent transcript by cleavage factors such as GreA or GreB allows the resumption of elongation from the new 3'terminus. GreA releases sequences of 2 to 3 nucleotides. The polypeptide is Transcription elongation factor GreA (Clostridium kluyveri (strain NBRC 12016)).